The primary structure comprises 117 residues: DNA-directed RNA polymerase subunit omega (117 aa).

Belongs to the RNA polymerase subunit omega family. The RNAP catalytic core consists of 2 alpha, 1 beta, 1 beta' and 1 omega subunit. When a sigma factor is associated with the core the holoenzyme is formed, which can initiate transcription.

The enzyme catalyses RNA(n) + a ribonucleoside 5'-triphosphate = RNA(n+1) + diphosphate. In terms of biological role, promotes RNA polymerase assembly. Latches the N- and C-terminal regions of the beta' subunit thereby facilitating its interaction with the beta and alpha subunits. The protein is DNA-directed RNA polymerase subunit omega of Ruegeria sp. (strain TM1040) (Silicibacter sp.).